A 313-amino-acid polypeptide reads, in one-letter code: UbiA prenyltransferase claS (313 aa).

Helical transmembrane passes span 30–52 (FAGTMVLFWPFAWGLTMAARALL) and 57–79 (TFGTILACGFFASCLLHSAGCIW). The NDxxDxxxD signature appears at 81 to 88 (DILDQDFD). Mg(2+) is bound by residues aspartate 84 and aspartate 88. The next 3 helical transmembrane spans lie at 99 to 121 (IASGAISNTGALIFMFAHLFILM), 131 to 148 (AWMIGIISIFPLPGIYPL), and 155 to 177 (WPQAWLGIALNTGIVMAWAYTTG). The Mg(2+) site is built by aspartate 205 and aspartate 209. The short motif at 205 to 209 (DKKDD) is the DxxxD element. The YxxxK signature appears at 205 to 209 (DKKDD). 3 consecutive transmembrane segments (helical) span residues 227-247 (PVLSLFGSIIVGSLLISGILN), 250-270 (ELPYFLVSVGGGGLHLATQLW), and 293-313 (AIVWAGLLLDYAWAVGVGAIM).

The protein belongs to the UbiA prenyltransferase family. The cofactor is Mg(2+).

Its subcellular location is the membrane. It carries out the reaction hydroquinone + (2E)-geranyl diphosphate = (2E)-geranylhydroquinone + diphosphate. The protein operates within secondary metabolite biosynthesis; terpenoid biosynthesis. Prenyltransferase; part of the gene cluster that mediates the biosynthesis of clavilactone A, a meroterpenoid that features a unique benzo-fused ten-membered carbocyclic ring unit with an alpha,beta-epoxy-gamma-lactone moiety, forming an intriguing 10/5/3 tricyclic nested skeleton. ClaR, ClaS and ClaT are sufficient to produce clavilactone A. Within the pathway, claS acts as an atypical UbiA prenyltransferase that transfers geranyl pyrophosphate (GPP) to hydroquinone (HYQ) instead of p-hydroxybenzoic acid (PHB), producing the first intermediate geranylhydroquinone. The cytochrome P450 monooxygenase claR then catalyzes the diradical coupling reaction between the intramolecular hydroquinone and allyl moieties to form the benzo-fused ten-membered carbocyclic ring unit of wigantol. Finally the cytochrome P450 monooxygenase claT exquisitely and stereoselectively assembles the alpha,beta-epoxy-gamma-lactone moiety, producing clavilactone A via arnebinol A. The polypeptide is UbiA prenyltransferase claS (Ampulloclitocybe clavipes (Club foot)).